The chain runs to 557 residues: DNA 3'-5' helicase XPB (557 aa).

A required for protein stability or solubility region spans residues 1-135 (MTDGPLIVQS…APLLGTRIAP (135 aa)). Residues 190-344 (VDNFWNGGSG…DVFSLIGPKR (155 aa)) form the Helicase ATP-binding domain. 203-210 (LPCGAGKT) contributes to the ATP binding site. Positions 298–301 (DEVH) match the DEAH box motif. The region spanning 398–544 (RVVEKLVAQH…AYRIVDADDI (147 aa)) is the Helicase C-terminal domain.

It belongs to the helicase family. RAD25/XPB subfamily. In terms of assembly, monomer. Requires Mn(2+) as cofactor. Mg(2+) is required as a cofactor. It depends on Ca(2+) as a cofactor.

The enzyme catalyses Couples ATP hydrolysis with the unwinding of duplex DNA by translocating in the 3'-5' direction.. It catalyses the reaction ATP + H2O = ADP + phosphate + H(+). Its function is as follows. ATP-dependent 3'-5' DNA helicase, unwinds 3'-overhangs, 3'- flaps, and splayed-arm DNA substrates but not 5'-overhangs or 5'-flap substrates. Requires ATP hydrolysis for activity; the ATPase activity is DNA-dependent and requires a minimum of 4 single-stranded nucleotides (nt) with 6-10 nt providing all necessary interactions for full processive unwinding. The ATPase prefers ATP over CTP or GTP, is almost inactive with TTP. The protein is DNA 3'-5' helicase XPB of Kineococcus radiotolerans (strain ATCC BAA-149 / DSM 14245 / SRS30216).